Reading from the N-terminus, the 125-residue chain is Protein ApaG (125 aa).

Residues 1–125 enclose the ApaG domain; that stretch reads MINAPRVCVQ…FRLAIPSLIH (125 aa).

The protein is Protein ApaG of Pectobacterium carotovorum subsp. carotovorum (strain PC1).